We begin with the raw amino-acid sequence, 274 residues long: 3-methyl-2-oxobutanoate hydroxymethyltransferase (274 aa).

2 residues coordinate Mg(2+): D46 and D85. 3-methyl-2-oxobutanoate contacts are provided by residues 46–47, D85, and K115; that span reads DS. E117 provides a ligand contact to Mg(2+). E184 serves as the catalytic Proton acceptor.

The protein belongs to the PanB family. As to quaternary structure, homodecamer; pentamer of dimers. Mg(2+) is required as a cofactor.

Its subcellular location is the cytoplasm. The enzyme catalyses 3-methyl-2-oxobutanoate + (6R)-5,10-methylene-5,6,7,8-tetrahydrofolate + H2O = 2-dehydropantoate + (6S)-5,6,7,8-tetrahydrofolate. It participates in cofactor biosynthesis; coenzyme A biosynthesis. In terms of biological role, catalyzes the reversible reaction in which hydroxymethyl group from 5,10-methylenetetrahydrofolate is transferred onto alpha-ketoisovalerate to form ketopantoate. In Halobacterium salinarum (strain ATCC 29341 / DSM 671 / R1), this protein is 3-methyl-2-oxobutanoate hydroxymethyltransferase.